Reading from the N-terminus, the 131-residue chain is Maturin (131 aa).

A Phosphotyrosine modification is found at tyrosine 34. A compositionally biased stretch (acidic residues) spans 107–120; that stretch reads FEEYSADVEEEEPE. The tract at residues 107–131 is disordered; sequence FEEYSADVEEEEPEADHPQMGVSQQ.

It belongs to the MTURN family. Phosphorylation at Tyr-34 is essential for its ability to promote megakaryocyte differentiation.

The protein resides in the cytoplasm. In terms of biological role, promotes megakaryocyte differentiation by enhancing ERK and JNK signaling as well as up-regulating RUNX1 and FLI1 expression. Represses NF-kappa-B transcriptional activity by inhibiting phosphorylation of RELA at 'Ser- 536'. May be involved in early neuronal development. This Bos taurus (Bovine) protein is Maturin (MTURN).